The primary structure comprises 305 residues: Acetyl-coenzyme A carboxylase carboxyl transferase subunit beta (305 aa).

The CoA carboxyltransferase N-terminal domain occupies 27-296 (LWVKCSACRE…PAAKADLAAR (270 aa)). Cys31, Cys34, Cys50, and Cys53 together coordinate Zn(2+). The C4-type zinc-finger motif lies at 31-53 (CSACRELIYKKQLNDNLKVCPKC).

This sequence belongs to the AccD/PCCB family. As to quaternary structure, acetyl-CoA carboxylase is a heterohexamer composed of biotin carboxyl carrier protein (AccB), biotin carboxylase (AccC) and two subunits each of ACCase subunit alpha (AccA) and ACCase subunit beta (AccD). Zn(2+) serves as cofactor.

The protein resides in the cytoplasm. The catalysed reaction is N(6)-carboxybiotinyl-L-lysyl-[protein] + acetyl-CoA = N(6)-biotinyl-L-lysyl-[protein] + malonyl-CoA. The protein operates within lipid metabolism; malonyl-CoA biosynthesis; malonyl-CoA from acetyl-CoA: step 1/1. In terms of biological role, component of the acetyl coenzyme A carboxylase (ACC) complex. Biotin carboxylase (BC) catalyzes the carboxylation of biotin on its carrier protein (BCCP) and then the CO(2) group is transferred by the transcarboxylase to acetyl-CoA to form malonyl-CoA. This is Acetyl-coenzyme A carboxylase carboxyl transferase subunit beta from Chloroflexus aggregans (strain MD-66 / DSM 9485).